Reading from the N-terminus, the 1071-residue chain is Intracellular phospholipase A2 (1071 aa).

The interval 1–22 is disordered; the sequence is MTTTNKDGPFRQQYLPGVHKEP. 7 ANK repeats span residues 411 to 440, 479 to 508, 510 to 539, 544 to 570, 578 to 610, 614 to 651, and 652 to 681; these read ENCY…TLFC, DGQS…KFTR, DRNE…EIAN, LGNS…ELGL, AGET…NMNA, HGNT…KINL, and RGES…TRCP. A PNPLA domain is found at 748–921; sequence ISMDGGGIRG…ISNNPALDLM (174 aa). Residues 752-757 carry the GXGXXG motif; the sequence is GGGIRG. The GXSXG signature appears at 784-788; it reads GTSTG. S786 functions as the Nucleophile in the catalytic mechanism. D908 serves as the catalytic Proton acceptor. The DGA/G motif lies at 908–910; sequence DGG.

It belongs to the patatin family.

It carries out the reaction a 1,2-diacyl-sn-glycero-3-phosphocholine + H2O = a 1-acyl-sn-glycero-3-phosphocholine + a fatty acid + H(+). Functionally, phospholipase that plays a critical role during oogenesis, ovulation, and/or embryogenesis. The polypeptide is Intracellular phospholipase A2 (Caenorhabditis elegans).